A 204-amino-acid chain; its full sequence is Pyridoxamine 5'-phosphate oxidase YLR456W homolog (204 aa).

Residues F65–T66 and N127 contribute to the FMN site.

This sequence belongs to the pyridoxamine 5'-phosphate oxidase family. Requires FMN as cofactor.

Its subcellular location is the cytoplasm. The protein resides in the nucleus. The polypeptide is Pyridoxamine 5'-phosphate oxidase YLR456W homolog (Saccharomyces cerevisiae (strain ATCC 204508 / S288c) (Baker's yeast)).